Here is a 1654-residue protein sequence, read N- to C-terminus: Mediator of RNA polymerase II transcription subunit 12 (1654 aa).

2 disordered regions span residues 52–72 and 1481–1530; these read DLNG…LSGN and SKQT…SFQT. The segment covering 1515–1530 has biased composition (polar residues); it reads PLSSARPSSEAASFQT.

The protein belongs to the Mediator complex subunit 12 family. Component of the SRB8-11 complex, which itself associates with the Mediator complex.

It localises to the nucleus. Its function is as follows. Component of the SRB8-11 complex. The SRB8-11 complex is a regulatory module of the Mediator complex which is itself involved in regulation of basal and activated RNA polymerase II-dependent transcription. The SRB8-11 complex may be involved in the transcriptional repression of a subset of genes regulated by Mediator. It may inhibit the association of the Mediator complex with RNA polymerase II to form the holoenzyme complex. This chain is Mediator of RNA polymerase II transcription subunit 12 (SRB8), found in Scheffersomyces stipitis (strain ATCC 58785 / CBS 6054 / NBRC 10063 / NRRL Y-11545) (Yeast).